Reading from the N-terminus, the 231-residue chain is Urease subunit gamma/beta (231 aa).

The tract at residues 1–101 is urease gamma; the sequence is MLLTPTELER…LVTVHQPIRP (101 aa). A urease beta region spans residues 102 to 231; sequence GKLPLAVMPT…RARAQHFKGA (130 aa).

The protein in the N-terminal section; belongs to the urease gamma subunit family. In the C-terminal section; belongs to the urease beta subunit family. As to quaternary structure, heterohexamer of 3 UreC (alpha) and 3 UreAB (gamma/beta) subunits.

It localises to the cytoplasm. It catalyses the reaction urea + 2 H2O + H(+) = hydrogencarbonate + 2 NH4(+). It functions in the pathway nitrogen metabolism; urea degradation; CO(2) and NH(3) from urea (urease route): step 1/1. In Pseudomonas syringae pv. tomato (strain ATCC BAA-871 / DC3000), this protein is Urease subunit gamma/beta.